Here is a 915-residue protein sequence, read N- to C-terminus: Metabotropic glutamate receptor 7 (915 aa).

An N-terminal signal peptide occupies residues 1–34 (MVQLGKLLRVLTLMKFPCCVLEVLLCVLAAAARG). Over 35–590 (QEMYAPHSIR…IIKLEWHSPW (556 aa)) the chain is Extracellular. C67 and C109 are oxidised to a cystine. N98 is a glycosylation site (N-linked (GlcNAc...) asparagine). Residues S159, 180 to 182 (AST), Y230, and D314 contribute to the L-glutamate site. 7 disulfides stabilise this stretch: C249–C541, C374–C390, C430–C437, C523–C542, C527–C545, C548–C560, and C563–C576. K407 contacts L-glutamate. N-linked (GlcNAc...) asparagine glycans are attached at residues N458 and N486. N-linked (GlcNAc...) asparagine glycosylation occurs at N572. A helical membrane pass occupies residues 591-615 (AVIPVFLAMLGIIATIFVMATFIRY). Residues 616 to 627 (NDTPIVRASGRE) are Cytoplasmic-facing. A helical membrane pass occupies residues 628-648 (LSYVLLTGIFLCYIITFLMIA). Residues 649-654 (KPDVAV) are Extracellular-facing. A helical transmembrane segment spans residues 655–675 (CSFRRVFLGLGMCISYAALLT). Topologically, residues 676–702 (KTNRIYRIFEQGKKSVTAPRLISPTSQ) are cytoplasmic. A helical membrane pass occupies residues 703–723 (LAITSSLISVQLLGVFIWFGV). At 724-753 (DPPNIIIDYDEHKTMNPEQARGVLKCDITD) the chain is on the extracellular side. Residues 754 to 775 (LQIICSLGYSILLMVTCTVYAI) form a helical membrane-spanning segment. Residues 776–788 (KTRGVPENFNEAK) lie on the Cytoplasmic side of the membrane. The helical transmembrane segment at 789–810 (PIGFTMYTTCIVWLAFIPIFFG) threads the bilayer. Topologically, residues 811-825 (TAQSAEKLYIQTTTL) are extracellular. The helical transmembrane segment at 826–850 (TISMNLSASVALGMLYMPKVYIIIF) threads the bilayer. Topologically, residues 851–915 (HPELNVQKRK…KYVSYNNLVI (65 aa)) are cytoplasmic. The disordered stretch occupies residues 874-895 (SRLSHKPSDRPNGEAKTELCEN). Over residues 879–892 (KPSDRPNGEAKTEL) the composition is skewed to basic and acidic residues. At S900 the chain carries Phosphoserine.

Belongs to the G-protein coupled receptor 3 family. In terms of assembly, homodimer. Interacts with PICK1. In terms of tissue distribution, widely distributed throughout the brain.

The protein resides in the cell membrane. Functionally, G-protein coupled receptor activated by glutamate that regulates axon outgrowth through the MAPK-cAMP-PKA signaling pathway during neuronal development. Ligand binding causes a conformation change that triggers signaling via guanine nucleotide-binding proteins (G proteins) and modulates the activity of downstream effectors, such as adenylate cyclase that it inhibits. The polypeptide is Metabotropic glutamate receptor 7 (Grm7) (Rattus norvegicus (Rat)).